The chain runs to 380 residues: 3-dehydroquinate synthase (380 aa).

Residues 118 to 122, 142 to 143, Lys-155, and Lys-164 contribute to the NAD(+) site; these read GVIGD and TS. Glu-197, His-259, and His-278 together coordinate Zn(2+).

This sequence belongs to the sugar phosphate cyclases superfamily. Dehydroquinate synthase family. Co(2+) is required as a cofactor. The cofactor is Zn(2+). NAD(+) serves as cofactor.

The protein localises to the cytoplasm. The catalysed reaction is 7-phospho-2-dehydro-3-deoxy-D-arabino-heptonate = 3-dehydroquinate + phosphate. The protein operates within metabolic intermediate biosynthesis; chorismate biosynthesis; chorismate from D-erythrose 4-phosphate and phosphoenolpyruvate: step 2/7. Catalyzes the conversion of 3-deoxy-D-arabino-heptulosonate 7-phosphate (DAHP) to dehydroquinate (DHQ). This is 3-dehydroquinate synthase from Sinorhizobium medicae (strain WSM419) (Ensifer medicae).